We begin with the raw amino-acid sequence, 293 residues long: uncharacterized protein (293 aa).

Disordered regions lie at residues 121–154 and 254–274; these read NLNF…SQNS and DILQ…PQQQ. The span at 133-149 shows a compositional bias: basic residues; that stretch reads SYHHHSHSHSHHSHSHS. Over residues 260-272 the composition is skewed to pro residues; it reads PPSPTPTPPPPPQ.

This is an uncharacterized protein from Dictyostelium discoideum (Social amoeba).